We begin with the raw amino-acid sequence, 886 residues long: Valine--tRNA ligase (886 aa).

The short motif at 43 to 53 (PYPTGRMHLGH) is the 'HIGH' region element. The short motif at 528–532 (KMSKS) is the 'KMSKS' region element. Lysine 531 lines the ATP pocket.

This sequence belongs to the class-I aminoacyl-tRNA synthetase family. ValS type 2 subfamily.

Its subcellular location is the cytoplasm. It carries out the reaction tRNA(Val) + L-valine + ATP = L-valyl-tRNA(Val) + AMP + diphosphate. Functionally, catalyzes the attachment of valine to tRNA(Val). As ValRS can inadvertently accommodate and process structurally similar amino acids such as threonine, to avoid such errors, it has a 'posttransfer' editing activity that hydrolyzes mischarged Thr-tRNA(Val) in a tRNA-dependent manner. This chain is Valine--tRNA ligase, found in Methanococcus maripaludis (strain DSM 14266 / JCM 13030 / NBRC 101832 / S2 / LL).